Reading from the N-terminus, the 153-residue chain is Large ribosomal subunit protein uL23m (153 aa).

The interval 110–153 (IFPEKDKKSKEGSVEEMHEKFMEDERQRQKPDPRRGGVTEWFGL) is disordered. Positions 111 to 146 (FPEKDKKSKEGSVEEMHEKFMEDERQRQKPDPRRGG) are enriched in basic and acidic residues.

It belongs to the universal ribosomal protein uL23 family. In terms of assembly, component of the mitochondrial ribosome large subunit (39S) which comprises a 16S rRNA and about 50 distinct proteins.

The protein resides in the mitochondrion. The protein is Large ribosomal subunit protein uL23m (mrpl23) of Danio rerio (Zebrafish).